The primary structure comprises 733 residues: Phosphoribosylformylglycinamidine synthase subunit PurL (733 aa).

Histidine 44 is a catalytic residue. Positions 47 and 86 each coordinate ATP. Mg(2+) is bound at residue glutamate 88. Substrate is bound by residues 89–92 (SHNH) and arginine 111. The active-site Proton acceptor is histidine 90. Aspartate 112 is a binding site for Mg(2+). Glutamine 240 provides a ligand contact to substrate. Aspartate 268 is a binding site for Mg(2+). Residue 312–314 (ESQ) coordinates substrate. Residues aspartate 496 and glycine 533 each coordinate ATP. Asparagine 534 contacts Mg(2+). Residue serine 536 participates in substrate binding.

The protein belongs to the FGAMS family. In terms of assembly, monomer. Part of the FGAM synthase complex composed of 1 PurL, 1 PurQ and 2 PurS subunits.

The protein resides in the cytoplasm. It catalyses the reaction N(2)-formyl-N(1)-(5-phospho-beta-D-ribosyl)glycinamide + L-glutamine + ATP + H2O = 2-formamido-N(1)-(5-O-phospho-beta-D-ribosyl)acetamidine + L-glutamate + ADP + phosphate + H(+). It participates in purine metabolism; IMP biosynthesis via de novo pathway; 5-amino-1-(5-phospho-D-ribosyl)imidazole from N(2)-formyl-N(1)-(5-phospho-D-ribosyl)glycinamide: step 1/2. Its function is as follows. Part of the phosphoribosylformylglycinamidine synthase complex involved in the purines biosynthetic pathway. Catalyzes the ATP-dependent conversion of formylglycinamide ribonucleotide (FGAR) and glutamine to yield formylglycinamidine ribonucleotide (FGAM) and glutamate. The FGAM synthase complex is composed of three subunits. PurQ produces an ammonia molecule by converting glutamine to glutamate. PurL transfers the ammonia molecule to FGAR to form FGAM in an ATP-dependent manner. PurS interacts with PurQ and PurL and is thought to assist in the transfer of the ammonia molecule from PurQ to PurL. The polypeptide is Phosphoribosylformylglycinamidine synthase subunit PurL (Wolinella succinogenes (strain ATCC 29543 / DSM 1740 / CCUG 13145 / JCM 31913 / LMG 7466 / NCTC 11488 / FDC 602W) (Vibrio succinogenes)).